An 877-amino-acid polypeptide reads, in one-letter code: TSET complex member tstB (877 aa).

2 disordered regions span residues 398 to 437 and 522 to 557; these read HLHHYHQGGSGTVGGSVPSSSSSSSSSSNITTSALSSGSS and TGLPNPISNNNNSSNNTKDQSTTTTTSTTSSSSNSI. Composition is skewed to low complexity over residues 412–437 and 529–556; these read GSVPSSSSSSSSSSNITTSALSSGSS and SNNNNSSNNTKDQSTTTTTSTTSSSSNS.

Component of the TSET complex, a heterohexamer composed of tstA, tstB, tstC, tstD, tstE and tstF, which may act in plasma membrane turnover. tstA, tstB, tstC and tstD are likely to be the core complex members with tstE and tstF acting as associated scaffold proteins.

The polypeptide is TSET complex member tstB (Dictyostelium discoideum (Social amoeba)).